The primary structure comprises 167 residues: Small ribosomal subunit protein uS5 (167 aa).

An S5 DRBM domain is found at 11–74; that stretch reads LQEKLIAVNR…EKARRNMINV (64 aa).

The protein belongs to the universal ribosomal protein uS5 family. Part of the 30S ribosomal subunit. Contacts proteins S4 and S8.

Functionally, with S4 and S12 plays an important role in translational accuracy. Located at the back of the 30S subunit body where it stabilizes the conformation of the head with respect to the body. This chain is Small ribosomal subunit protein uS5, found in Escherichia coli O139:H28 (strain E24377A / ETEC).